The sequence spans 775 residues: Putative late blight resistance protein homolog R1A-3 (775 aa).

Residues 16-39 (PRMNEEIVGFEDVIENLRKKLLSE) are a coiled coil. Positions 17–237 (RMNEEIVGFE…LSEMEKEVEC (221 aa)) constitute an NB-ARC domain. 50-57 (GMPGLGKT) is an ATP binding site. The HMA domain maps to 711–775 (IKKMILQFDI…VGKLIDSGML (65 aa)).

It belongs to the disease resistance NB-LRR family.

It localises to the cytoplasm. It is found in the membrane. Functionally, confers resistance to late blight (Phytophthora infestans) races carrying the avirulence gene Avr1. Resistance proteins guard the plant against pathogens that contain an appropriate avirulence protein via an indirect interaction with this avirulence protein. That triggers a defense system including the hypersensitive response, which restricts the pathogen growth. This Solanum demissum (Wild potato) protein is Putative late blight resistance protein homolog R1A-3 (R1A-3).